Consider the following 188-residue polypeptide: F-box only protein 36 (188 aa).

Residues 91-137 (FDFLERLSDDLLLTIISYLDLEDIARLCQTSHRFAKLCMSDKLWEQI) form the F-box domain.

Directly interacts with SKP1 and CUL1.

In terms of biological role, substrate-recognition component of the SCF (SKP1-CUL1-F-box protein)-type E3 ubiquitin ligase complex. The protein is F-box only protein 36 (FBXO36) of Homo sapiens (Human).